Reading from the N-terminus, the 2312-residue chain is Protein Ycf2 (2312 aa).

Disordered regions lie at residues 170–191, 223–253, and 942–1009; these read SSQLKGSSDQSRDHFDSIGTED, TEIESDRFSKGLSGSSSKSRLFTEGEKEMNN, and KRKK…KRKE. Residues 232–242 are compositionally biased toward low complexity; it reads KGLSGSSSKSR. 2 stretches are compositionally biased toward basic and acidic residues: residues 243 to 252 and 950 to 1007; these read LFTEGEKEMN and KRKE…PEKR. 1439 to 1446 serves as a coordination point for ATP; that stretch reads GSIGSGRS. Disordered stretches follow at residues 1513-1532, 1857-1983, and 2050-2166; these read YEDRDSDDYEPGASDDYEPG, LVGS…LLRP, and PAEE…DGFS. Over residues 1863–1963 the composition is skewed to acidic residues; sequence TEEEVEGTEE…GEGTEDEEVE (101 aa). Over residues 1964–1976 the composition is skewed to basic and acidic residues; it reads GTEKDSSQFDNDR. Composition is skewed to acidic residues over residues 2050-2067 and 2074-2149; these read PAEEIPEEEDPLPEEALE and GEEE…ENDS.

It belongs to the Ycf2 family.

It localises to the plastid. The protein resides in the chloroplast stroma. Functionally, probable ATPase of unknown function. Its presence in a non-photosynthetic plant (Epifagus virginiana) and experiments in tobacco indicate that it has an essential function which is probably not related to photosynthesis. The chain is Protein Ycf2 from Oenothera parviflora (Small-flowered evening primrose).